The following is a 535-amino-acid chain: Bifunctional purine biosynthesis protein PurH (535 aa).

The MGS-like domain maps to 6 to 151 (TRLPIRRALI…KNHKDVAIVV (146 aa)).

This sequence belongs to the PurH family.

The catalysed reaction is (6R)-10-formyltetrahydrofolate + 5-amino-1-(5-phospho-beta-D-ribosyl)imidazole-4-carboxamide = 5-formamido-1-(5-phospho-D-ribosyl)imidazole-4-carboxamide + (6S)-5,6,7,8-tetrahydrofolate. The enzyme catalyses IMP + H2O = 5-formamido-1-(5-phospho-D-ribosyl)imidazole-4-carboxamide. It functions in the pathway purine metabolism; IMP biosynthesis via de novo pathway; 5-formamido-1-(5-phospho-D-ribosyl)imidazole-4-carboxamide from 5-amino-1-(5-phospho-D-ribosyl)imidazole-4-carboxamide (10-formyl THF route): step 1/1. It participates in purine metabolism; IMP biosynthesis via de novo pathway; IMP from 5-formamido-1-(5-phospho-D-ribosyl)imidazole-4-carboxamide: step 1/1. The sequence is that of Bifunctional purine biosynthesis protein PurH from Pseudomonas entomophila (strain L48).